Here is a 601-residue protein sequence, read N- to C-terminus: Probable protein arginine N-methyltransferase 3 (601 aa).

Residues 1–10 (MAATMVKHEI) show a composition bias toward basic and acidic residues. The tract at residues 1 to 50 (MAATMVKHEILNYSEDEEENYSDEGDWGDWKADDNGIEGGEEEEEDDGDD) is disordered. Acidic residues-rich tracts occupy residues 14–27 (SEDEEENYSDEGDW) and 35–50 (NGIEGGEEEEEDDGDD). The segment at 57–78 (CLFCDSHFVSCDLLFEHCRLSH) adopts a C2H2-type zinc-finger fold. The SAM-dependent MTase PRMT-type domain occupies 242-554 (NENYFGSYSS…NDRREAIGTE (313 aa)). The S-adenosyl-L-homocysteine site is built by arginine 264, glycine 288, glutamate 310, serine 312, valine 345, and glutamate 346. Residues glutamate 365 and glutamate 374 contribute to the active site.

It belongs to the class I-like SAM-binding methyltransferase superfamily. Protein arginine N-methyltransferase family.

Its subcellular location is the cytoplasm. It is found in the cytosol. The catalysed reaction is L-arginyl-[protein] + S-adenosyl-L-methionine = N(omega)-methyl-L-arginyl-[protein] + S-adenosyl-L-homocysteine + H(+). It carries out the reaction L-arginyl-[protein] + 2 S-adenosyl-L-methionine = N(omega),N(omega)-dimethyl-L-arginyl-[protein] + 2 S-adenosyl-L-homocysteine + 2 H(+). Protein-arginine N-methyltransferase that catalyzes both the monomethylation and asymmetric dimethylation of the guanidino nitrogens of arginine residues in target proteins, and therefore falls into the group of type I methyltransferases. The sequence is that of Probable protein arginine N-methyltransferase 3 (PRMT3) from Arabidopsis thaliana (Mouse-ear cress).